A 386-amino-acid chain; its full sequence is 1-deoxy-D-xylulose 5-phosphate reductoisomerase (386 aa).

NADPH contacts are provided by T13, G14, S15, I16, N40, and N122. K123 contributes to the 1-deoxy-D-xylulose 5-phosphate binding site. E124 provides a ligand contact to NADPH. Position 148 (D148) interacts with Mn(2+). 1-deoxy-D-xylulose 5-phosphate is bound by residues S149, E150, S177, and H201. E150 is a binding site for Mn(2+). G207 lines the NADPH pocket. The 1-deoxy-D-xylulose 5-phosphate site is built by S214, N219, K220, and E223. E223 contributes to the Mn(2+) binding site.

It belongs to the DXR family. Mg(2+) serves as cofactor. It depends on Mn(2+) as a cofactor.

The catalysed reaction is 2-C-methyl-D-erythritol 4-phosphate + NADP(+) = 1-deoxy-D-xylulose 5-phosphate + NADPH + H(+). The protein operates within isoprenoid biosynthesis; isopentenyl diphosphate biosynthesis via DXP pathway; isopentenyl diphosphate from 1-deoxy-D-xylulose 5-phosphate: step 1/6. In terms of biological role, catalyzes the NADPH-dependent rearrangement and reduction of 1-deoxy-D-xylulose-5-phosphate (DXP) to 2-C-methyl-D-erythritol 4-phosphate (MEP). This is 1-deoxy-D-xylulose 5-phosphate reductoisomerase from Francisella tularensis subsp. holarctica (strain OSU18).